The sequence spans 226 residues: Hand transcription factor 1 (226 aa).

Residues 1–15 are compositionally biased toward polar residues; it reads MVKSTTAGNNAVSSL. A disordered region spans residues 1–35; it reads MVKSTTAGNNAVSSLESTDSKKSRKEKSREKEHRR. Residues 23–36 are basic motif; it reads SRKEKSREKEHRRA. Residues 23 to 77 enclose the bHLH domain; the sequence is SRKEKSREKEHRRAQCINSAFEILQQHIPYLKSEERKSLPKIKTLRLAMQYIDHL. Residues 37 to 77 are helix-loop-helix motif; it reads QCINSAFEILQQHIPYLKSEERKSLPKIKTLRLAMQYIDHL.

It is found in the nucleus. In terms of biological role, probable transcription factor which regulates early embryonic myogenesis, in cooperation with transcription factors unc-120 and hlh-1. Involved in controlling the number and position of somatic gonadal precursor cells (SGPs) in the gonadal primordium, and embryonic body shape. The protein is Hand transcription factor 1 of Caenorhabditis elegans.